The following is a 545-amino-acid chain: 2-succinyl-5-enolpyruvyl-6-hydroxy-3-cyclohexene-1-carboxylate synthase (545 aa).

It belongs to the TPP enzyme family. MenD subfamily. Homodimer. It depends on Mg(2+) as a cofactor. Mn(2+) serves as cofactor. The cofactor is thiamine diphosphate.

It carries out the reaction isochorismate + 2-oxoglutarate + H(+) = 5-enolpyruvoyl-6-hydroxy-2-succinyl-cyclohex-3-ene-1-carboxylate + CO2. The protein operates within quinol/quinone metabolism; 1,4-dihydroxy-2-naphthoate biosynthesis; 1,4-dihydroxy-2-naphthoate from chorismate: step 2/7. It functions in the pathway quinol/quinone metabolism; menaquinone biosynthesis. Functionally, catalyzes the thiamine diphosphate-dependent decarboxylation of 2-oxoglutarate and the subsequent addition of the resulting succinic semialdehyde-thiamine pyrophosphate anion to isochorismate to yield 2-succinyl-5-enolpyruvyl-6-hydroxy-3-cyclohexene-1-carboxylate (SEPHCHC). In Nocardia farcinica (strain IFM 10152), this protein is 2-succinyl-5-enolpyruvyl-6-hydroxy-3-cyclohexene-1-carboxylate synthase.